The primary structure comprises 340 residues: tRNA N6-adenosine threonylcarbamoyltransferase (340 aa).

His114 and His118 together coordinate Fe cation. Substrate contacts are provided by residues 140 to 144, Asp173, Gly186, Asp190, and Asn281; that span reads TISGG. Asp309 is a Fe cation binding site.

The protein belongs to the KAE1 / TsaD family. The cofactor is Fe(2+).

The protein resides in the cytoplasm. It carries out the reaction L-threonylcarbamoyladenylate + adenosine(37) in tRNA = N(6)-L-threonylcarbamoyladenosine(37) in tRNA + AMP + H(+). Functionally, required for the formation of a threonylcarbamoyl group on adenosine at position 37 (t(6)A37) in tRNAs that read codons beginning with adenine. Is involved in the transfer of the threonylcarbamoyl moiety of threonylcarbamoyl-AMP (TC-AMP) to the N6 group of A37, together with TsaE and TsaB. TsaD likely plays a direct catalytic role in this reaction. The sequence is that of tRNA N6-adenosine threonylcarbamoyltransferase from Christiangramia forsetii (strain DSM 17595 / CGMCC 1.15422 / KT0803) (Gramella forsetii).